We begin with the raw amino-acid sequence, 256 residues long: Small ribosomal subunit protein eS1 (256 aa).

Alanine 2 bears the N-acetylalanine; partial mark.

This sequence belongs to the eukaryotic ribosomal protein eS1 family. As to quaternary structure, component of the small ribosomal subunit. Mature ribosomes consist of a small (40S) and a large (60S) subunit. The 40S subunit contains about 33 different proteins and 1 molecule of RNA (18S). The 60S subunit contains about 49 different proteins and 3 molecules of RNA (25S, 5.8S and 5S).

The protein localises to the cytoplasm. The polypeptide is Small ribosomal subunit protein eS1 (rps1) (Sclerotinia sclerotiorum (strain ATCC 18683 / 1980 / Ss-1) (White mold)).